We begin with the raw amino-acid sequence, 549 residues long: Glucose-6-phosphate isomerase (549 aa).

Residues Lys-80, Lys-228, and Lys-234 each carry the N6-acetyllysine modification. Residue Glu-355 is the Proton donor of the active site. Catalysis depends on residues His-386 and Lys-514.

The protein belongs to the GPI family.

The protein localises to the cytoplasm. The catalysed reaction is alpha-D-glucose 6-phosphate = beta-D-fructose 6-phosphate. It participates in carbohydrate biosynthesis; gluconeogenesis. Its pathway is carbohydrate degradation; glycolysis; D-glyceraldehyde 3-phosphate and glycerone phosphate from D-glucose: step 2/4. Catalyzes the reversible isomerization of glucose-6-phosphate to fructose-6-phosphate. This chain is Glucose-6-phosphate isomerase, found in Escherichia coli (strain SMS-3-5 / SECEC).